Consider the following 4841-residue polypeptide: MDITGLSIMNAQASRQPGPHLLHQLVKPPNQNVALDYMGSNQRVNITYHQLHEAATSLASRITKTSGSAQGQFVVPLLIHQSPSLYISLLAILKAGGAFCPLNIDAPPERVKFILDDVAATVVLVSKELASAIPNGISAAVIIVDEEEDQSSTLQSLSTEVSSRVPGPEDLAYVMYTSGSTGTPKGVGISHDAATQALIAHDRHIPSFSRFLQFAAPTFDVSVFEIFFPFFRGATLVSVRRIEMLDDLPGVLRTMEVDACELTPTVAGSLLRTRSNAPELKVLLTIGEMLNAPVVEEFGGDENRPSMLWAMYGPTEATIHCTLQAEFSSDSSTGNIGVPLDTVSCFIIEVPDSDSEQSEIRVLPQGEVGELAVGGCQLATGYINRPEQTNSVFIDSPFGRIYRTGDKARLLPNGKLECFGRLSDGQVKLRGQRLELGEVEQAVLRTSGCHSAVAAVARSILVVFCAVDAGVTEDAVLKHCGDWLPQYMVPGEVVLMSEFPRLPSGKVDRKRLKAEYEEHKEAMLEDIADSEPVDEFESSLLVVVSRVMNFKVNKSTSLAAIGMDSLSAIKLASSLRNAGYSIDTTDLLTAKTVFDIIFAARRQIQNQTVSSLPFSTNLSLDFGQILQQNATLADMSGLIEEIIPCTPLQAAMLAETSHNSTAYCNQVELAIPLSYSAYQISESFAQLSQKNPILRTGFAIVDRRFVTLVYGELRPEQIKVVDQVQGDFSLSSPEDFCSPMRLQIQRDSVDEKSRVLLQIHHSLYDGWSMDVLLSDWSKLLLQEPVSEHSSFREVVKFYQQLQTSDDARMFWTENLAGWKQTPLPKLRDKLVHSGEVLSFRRPMSLSRRRVTAEVQRNGFSPQVLFQASLALLWTSVTGARDITIGSVTSGRTIPVIDIEQIIGPCIAALPVRIDFDKISIGLELLKNLHSSNRKIMQYCTVSLSEVKKLVGLQLGESLYDVLFVYQESLASSERTQCMVKEATHLDRLETPILFEVEPTEDGFTLQVTYHEAIVPPATVQHMVDQFEALAHSILERPTQEIKCALREIKCTPSVDNINASPPQRVPDLARLFEDVVRKHPEENALLFYHSLKVANNVVWSFRELNNEANQIAHYLQSCGIQVGQVVAVIMEKSPALYASILAIIKCGCGYLPILPSTPLARTREILLQAEIKYCLVDSSPDQLASMLELSTITVNTNLFNEFSTANLDNEVDGSRLAYVIYTSGTTGTPKGVAVQQQSIVANIEHLEATYPKPSSSQGRLLQACSQAFDVSVFEIFYTWCAGMCLCAGTNDTILEDIERSIRDLEITHLSMTPTVAALVEPSNVPSVQFLVTAGEPMTQAVHNKWCHQLWQGYGPSETTNICTVKKMATDDHIEHLGHVFPNTSAVVLSPATLDTVPLNWVGEFCFGGAQVAQGYLNMPELTAQKFIHHPQYGKLYRSGDMGRMLPDGSLVILGRIDDQVKLRGQRIEIGEINSTVTMAGFATSAATVLVEHEESTIKQLALFFVPQHDPTEFRVLEIDNEVQQSLAAHMQSRLPGYMVPSYLVPISSMPMTSSGKVDKRRLHDCFDKLDRHYLEKVSRSSGDNPDEGDWSRMDLVISEVIKESVAASAGGFGRWTPFTVLGVDSISAIDLARALNAKLGARVAVSDILRNPTIAQLAKHLEGKPLYEETAFEGTQREFFPAAFTAAIKEVFLGESKAIKDILPCTPLQEAMLSRGQRGYYNKVLLRLKAEPGAIRSYWEVMSKRHDILRTCFATTTDSKHAIAQVVLEDWEIPWRTFDISEPSFDGAIEEHLKSLPDPVDSRTPPVSLALLRYRGSAFLSFICHHALYDGVAMERLLKEVEALAGGEDLLPPVSYKEFLEISTNLPNDTEEFWQQHLRGYKALSIFTQSSSSEIDQSTCTTSLDMPLANLQGRLRDFGTTLLSVCQASWATVLAMTYRQPDVCFGNVMSGRTLDIDGLERLVAPCFNTIPIRVALPTTSSNIDMVKHLQKLNTEMLTYQFTPLRLIQRSINRTGKHIFDTLLLLQKPLQDIDQTVWELEADSGDMDIPLVCEVVPCPGLNSLVINLHRDMSIVTEDVASAMADAFKVILKAILTAPHSTPMTAEDLPDSLRSILQQLKPQYDKKDNTGNMPDGEEEWSEVELDVRQVLAKLSGVSEQQIKRRTTIFQLGLDSINAVQVASILRQRGFIVSASDVIECPSCSKIAAKLLENRSRTKSEDLKRYDIGRFSHQVYSEIAGRLPQTATIEAVLPCTPLQSAMLASFIQSGGENYLNAMEYIVTDEISLESLTKAWQLLHERHPMLRTGFVPVQHPDATFAMVRYAPGSMKTPVSIAESEGDEVSDLLNLKGNTSERVLTALHQPPWTVVLAQTPQQTSMKFVAHHVLYDAHALQMMLYDLSRLVKSERLPPVSRIEPAVSAILINSLDEQGSEKAFWEAKASSTVVNKFPLMTPLRVESRCMLADTTVASLSFTKLKRATQASNVTIQAVIQAAWTRVLASYLGENSVVFGVALSGRTTDETKDAPFPCLNTVPVVGNNVTSNAELVSYMMEYNQRLHKHQFSPLGKVQRWLGHPTGPVFDTLIAYQKMADAGSSSLPWKLVKDEARVEYSVSLEIEPTENDHVRLCITYYNDILPREQAHLLMKQFDSSLNHIACNHLATEDEAFNLSPDLYSVLPPSHPVLDAPVQFLHQFVELGAAVHPNKLALEFVSAFDGDTCLKKQWDYRQLNIMGNRVANMLQEKLTPGSIVAIHFDKCPEAYFSILGILKAGCSFVALDPSAPKARKQFIVEDSRAPCLLTRSLEDLDFEAKTAILEVKVESLSVLEEEELIFQPAISPSDTCYCLYTSGTTGTPKGCEITHDNAVQAMMAFQELFKGHWDADSRWLQFAALHFDVSVLEQYWSWSVGMAVVAAPKDLILDDLTASINKLEITHIDLTPSLARLTHPDEIPSLCRGVFITGGEQLKQEILDVWGPKAVIYNAYGPTEATIGVTMFQRVPVNGRPSNIGKQFPNVGSFIFKQNTNTPVLRGAVGELCVSGRLVGKGYLNRPQLTEERFPTLEEFGERVYRTGDLVRVLHDGCFDFLGRADDQVKLRGQRLEIAEINHIIRTDVTEVHDAATIVARHGTSGKDVLVSFIVSEHLTTGPLRVVSDDEGLATKAKEACRAKLPGYMVPTYILLLPYIPLSSNNKAEIKDLKKLFSELAPEQLMELSHAATAPVSRGAQDILVLLYDALAQFSNISKDDISPTTSIFDVGVDSITALKLASLLKSRGLHAVSPAMLLKNPVIGDLANCLAKAASSQRQKLAREIKQSIQAYAHRHRGLVYSSLNIGPADIEYIAPCSPLQEGIISRSLTSTKPGAYFNTFQLKLHQSTTTTKFQQAWKDLVFSESILRTVFVPSTDGFLQVALRNPLFPWESTAFGSNELAEYYFAEQKENWIQRNKSSITQPLLLTYVETPTSRLFTVHIFHALYDGNSFDLMMDRVAANYAGTSVQKAPSFFEALTSGPLTRHDNCKGFWEKHLEGWVPSSITAHERSTHGSVVVAERDMPISNFEAMRSSHNVTLQAVIMALWTSVLQNLVESQITIGVVVSGRAVDLPGVENTIGPLFNTVPFFRQAVQHEDWKSLVRRCHDFNASVLDFQHVPLKNIQKWCSHNKALFDTLFTYQIDEAKTDDNELPFEIQNSEVTPDYPLALEAVYTKTGKLRFTLVAQGHVVSQSILDNLLNEIERFADLAAESPQSEVPVPQFKIPIVDDFHSGNAEKDSQNSFEWTSEAQAIQNEISVLVGINPAEIAQDVSILELGLDSIDVIKLAAKLKRKSINLAPSQIMRQQTIAKMITELASITNDSSCPPRDNFLSRIGYRLREHLEASEVDISNVESVLPPTHLQESMVAGMIHSGFEAYFNHDVLRVSDHVDTTQLIQAWKDLIHQTPVLRTGFYQVESQDFDMTFCQVVSKSIDIDFEATRVEDLSELHQITDAAKSAAKNGRGQKKLFQLKLVVIGQERYMVLSIAHALYDGWSLSLLFQDLQALLEGRLITRPPVEQFIARVMESTTSKAKDFWMQYLQDAPSSTILTKVQLPTVEEKVQRFESVSKVSLLEIDAACKRLSVSLQVLCQACWAVTLARQIRSTDVTFGTVLSGRDFDGADSLVFPTMNTVALRCILHGSAAEFLRYLEENMTDIRDFQHYPLRKAQSAAKVDGQDLFNTLFILQRSPVSSDPADRPLLTSVEASSSTEYPLCVEAEAVSDSLVWRLALQPQCSWNGGPQSLLETLDNVMSFLLKSKDPEILSFSERGVSICGTPPVALPESIIHEDASDNYSSRDEKIEWNQNEIGIREVLFQVSNVPILSIKLSDNLYHLGLDSISAIKVSSLLRKAGINLRPQDLIKSSSISEMAQKADTKLKKPLQTLETVEDWLPPADIDVNKLLADNGINKDEAEVLPALPMQVYMLTAWENSDGSVFFPEFPCRIKTSASLGEIDQAWGKLVSETPLLRTCFASTQSSTIPFIQIILKELGIPLSSLQPGERSNCCIRPLVEVNIEQEDKDTWLLRLKLHHALYDGVSLPALLQRLSELLNGSGTMENKGLSQWKQFTMRHTTDEARIARREFWTSYLKGSSSSPIIANSDTDVKMRTSHLNRSAISDISSIQALATQSGVSFQSLFLSAYARALAKQNNVSDTVFGLYLANRAAGENLPQTYPTLNLVPLRVSSPINRPLAAVAADIQRDIHLITSESRAEVGLWEIAQWTGIRITSFVNFLTLPGDTDPTGNSITVLPETNTGVVVKDNLPDRPRTPYLESIFRNDIPMAIDIEASVDGKNLAIGVFGSLQQISSEEALTLVANIAEILDGGI.

Residues 26-429 (VKPPNQNVAL…GRLSDGQVKL (404 aa)) are adenylation 1. In terms of domain architecture, Carrier 1 spans 531–604 (EPVDEFESSL…DIIFAARRQI (74 aa)). Position 565 is an O-(pantetheine 4'-phosphoryl)serine (serine 565). A condensation 1 region spans residues 640 to 1042 (EEIIPCTPLQ…ILERPTQEIK (403 aa)). The segment at 1072–1463 (FEDVVRKHPE…GRIDDQVKLR (392 aa)) is adenylation 2. In terms of domain architecture, Carrier 2 spans 1587–1665 (EGDWSRMDLV…QLAKHLEGKP (79 aa)). Serine 1625 is modified (O-(pantetheine 4'-phosphoryl)serine). The condensation 2 stretch occupies residues 1702–2043 (ILPCTPLQEA…QTVWELEADS (342 aa)). The Carrier 3 domain maps to 2139–2212 (SEVELDVRQV…KIAAKLLENR (74 aa)). Serine 2173 is subject to O-(pantetheine 4'-phosphoryl)serine. A condensation 3 region spans residues 2248-2663 (AVLPCTPLQS…NHLATEDEAF (416 aa)). The tract at residues 2695–3090 (AAVHPNKLAL…GRADDQVKLR (396 aa)) is adenylation 3. The Carrier 4 domain maps to 3219-3293 (QDILVLLYDA…DLANCLAKAA (75 aa)). Serine 3253 bears the O-(pantetheine 4'-phosphoryl)serine mark. The interval 3333-3735 (IAPCSPLQEG…DLAAESPQSE (403 aa)) is condensation 4. Positions 3759–3838 (QNSFEWTSEA…KMITELASIT (80 aa)) constitute a Carrier 5 domain. The residue at position 3799 (serine 3799) is an O-(pantetheine 4'-phosphoryl)serine. The condensation 5 stretch occupies residues 3873 to 4242 (SVLPPTHLQE…VEAEAVSDSL (370 aa)). Positions 4318 to 4394 (IEWNQNEIGI…EMAQKADTKL (77 aa)) constitute a Carrier 6 domain. O-(pantetheine 4'-phosphoryl)serine is present on serine 4355. The interval 4430–4726 (EVLPALPMQV…DIHLITSESR (297 aa)) is condensation 6.

Belongs to the NRP synthetase family.

The protein operates within siderophore biosynthesis. Functionally, nonribosomal peptide synthetase; part of the gene cluster that mediates the biosynthesis of hydroxamate-containing siderophores that play a critical role in virulence. Gibberella zeae produces extracellular coprogen-type siderophores as well as the intracellular siderophore ferricrocin. The role of extracellular siderophores is to supply iron to the fungus during plant infection, and the intracellular ferricrocin is required for intracellular iron distribution and storage with a crucial role in ascus and ascospore development. SID1 catalyzes the conversion of L-ornithine to N(5)-hydroxyornithine, the first step in the biosynthesis of all hydroxamate-containing siderophores. The assembly of extracellular coprogen-type siderophores is performed by the nonribosomal peptide synthetase (NRPS) NPS6 whereas the intracellular siderophore ferricrocin is assembled by NPS2. The chain is Nonribosomal peptide synthetase 2 from Gibberella zeae (strain ATCC MYA-4620 / CBS 123657 / FGSC 9075 / NRRL 31084 / PH-1) (Wheat head blight fungus).